A 271-amino-acid polypeptide reads, in one-letter code: 4-hydroxy-tetrahydrodipicolinate reductase (271 aa).

10–15 (GAAGRM) lines the NAD(+) pocket. Residue R37 coordinates NADP(+). Residues 100–102 (GTT) and 124–127 (SGNM) contribute to the NAD(+) site. The active-site Proton donor/acceptor is the H157. H158 contributes to the (S)-2,3,4,5-tetrahydrodipicolinate binding site. K161 (proton donor) is an active-site residue. Residue 167–168 (GT) participates in (S)-2,3,4,5-tetrahydrodipicolinate binding. A disordered region spans residues 183–202 (SLSEHEQRGRDGHTGPRKDG). Basic and acidic residues predominate over residues 185 to 202 (SEHEQRGRDGHTGPRKDG).

This sequence belongs to the DapB family.

The protein resides in the cytoplasm. The catalysed reaction is (S)-2,3,4,5-tetrahydrodipicolinate + NAD(+) + H2O = (2S,4S)-4-hydroxy-2,3,4,5-tetrahydrodipicolinate + NADH + H(+). It carries out the reaction (S)-2,3,4,5-tetrahydrodipicolinate + NADP(+) + H2O = (2S,4S)-4-hydroxy-2,3,4,5-tetrahydrodipicolinate + NADPH + H(+). It participates in amino-acid biosynthesis; L-lysine biosynthesis via DAP pathway; (S)-tetrahydrodipicolinate from L-aspartate: step 4/4. Catalyzes the conversion of 4-hydroxy-tetrahydrodipicolinate (HTPA) to tetrahydrodipicolinate. This chain is 4-hydroxy-tetrahydrodipicolinate reductase, found in Beijerinckia indica subsp. indica (strain ATCC 9039 / DSM 1715 / NCIMB 8712).